A 700-amino-acid polypeptide reads, in one-letter code: MLRPATPLAVLLFAAFGLLTLATISTPIIKQIPLSSFEIKDVGDLSFGVFGYCTSSGCSPIEIGYDTSAFSDKINSDFDIPRATRSTLSSILIVHPVAALITLINFVLAIVAHFHSPSHSARYLLILFIVSFVDFIVCLLCFLVDVLLFIPHLSWGSYIVVAATILVAFCGLVTCAMRRTLVNRKANRKRIAENAEMSGENYYNRQAQTAPVTQVTGPQPTVPMISGANGGGDKLPEFTTFEKKDDRSEERIPLTSVSPIERSPATLVNDSTPPNFMDGAPSRSPSTTPVGRDQYGNPLPPQDGYAMRVGPQNERLNSRGRGGMPPGGYRGRGGFPGPGRGGGPPQNGRGGYGPPGRGRGGYGPPPRGYGGPGPRGGRGPPPQGYQGGPDRRPSPGAPYGPGPGVGTYGPSQPSPYANRQQSPGPQFAAPGYGNPEQPGPQYSAYNPRRVSLPRAESPPPLPGIDDGMPGPAVELDASPANRGVGQYGIRDSDSDVAGMLAMQQARVPDPDRGNDANGHSQEGPNDVYVPPRQAWNQGFVGSTPGLAPPTARGPTRPISEAVTATVASDYYEDVDPRFAEPSAAADKRPPPISMQSPPASNSYDDIPNRARSPAESENSNFTSISQRGINPRWNSANAPMPPPVAGVYAGGGGGGNVVPRRPVNRPGAGPADGSDLFLNSNPDFQLPGRGGNMPRAAGPR.

Residues 1–8 (MLRPATPL) lie on the Cytoplasmic side of the membrane. A helical membrane pass occupies residues 9-29 (AVLLFAAFGLLTLATISTPII). The Extracellular portion of the chain corresponds to 30 to 90 (KQIPLSSFEI…PRATRSTLSS (61 aa)). The chain crosses the membrane as a helical span at residues 91 to 111 (ILIVHPVAALITLINFVLAIV). At 112–123 (AHFHSPSHSARY) the chain is on the cytoplasmic side. A helical transmembrane segment spans residues 124-144 (LLILFIVSFVDFIVCLLCFLV). The Extracellular portion of the chain corresponds to 145–152 (DVLLFIPH). A helical membrane pass occupies residues 153 to 173 (LSWGSYIVVAATILVAFCGLV). Over 174–700 (TCAMRRTLVN…GNMPRAAGPR (527 aa)) the chain is Cytoplasmic. Disordered stretches follow at residues 226–491 (SGAN…GIRD), 507–560 (VPDP…PISE), and 573–700 (DVDP…AGPR). Positions 234 to 252 (KLPEFTTFEKKDDRSEERI) are enriched in basic and acidic residues. A compositionally biased stretch (gly residues) spans 320–378 (GRGGMPPGGYRGRGGFPGPGRGGGPPQNGRGGYGPPGRGRGGYGPPPRGYGGPGPRGGR). The segment covering 414-424 (SPYANRQQSPG) has biased composition (polar residues). Polar residues-rich tracts occupy residues 593 to 603 (SMQSPPASNSY) and 615 to 637 (ESEN…NSAN). Low complexity predominate over residues 657 to 671 (VVPRRPVNRPGAGPA).

This sequence belongs to the palI/RIM9 family.

It localises to the cell membrane. Functionally, required for the proteolytic cleavage of the transcription factor pacc-1 in response to alkaline ambient pH. This Neurospora crassa (strain ATCC 24698 / 74-OR23-1A / CBS 708.71 / DSM 1257 / FGSC 987) protein is pH-response regulator protein palI/prr-5 (prr-5).